Here is an 83-residue protein sequence, read N- to C-terminus: Retinal cone rhodopsin-sensitive cGMP 3',5'-cyclic phosphodiesterase subunit gamma (83 aa).

Residues 1–51 are disordered; sequence MSDSPCLSPPAPSQGPTTPRKGPPKFKQRQTRQFKSKPPKKGVKGFGDDIP. Residues 22–43 show a composition bias toward basic residues; it reads GPPKFKQRQTRQFKSKPPKKGV.

Belongs to the rod/cone cGMP-PDE gamma subunit family. As to quaternary structure, tetramer composed of two catalytic chains (alpha and beta), and two inhibitory chains (gamma).

It catalyses the reaction 3',5'-cyclic GMP + H2O = GMP + H(+). In terms of biological role, participates in processes of transmission and amplification of the visual signal. cGMP-PDEs are the effector molecules in G-protein-mediated phototransduction in vertebrate rods and cones. This is Retinal cone rhodopsin-sensitive cGMP 3',5'-cyclic phosphodiesterase subunit gamma (Pde6h) from Rattus norvegicus (Rat).